The following is a 147-amino-acid chain: Hemoglobin subunit beta-1 (147 aa).

A Globin domain is found at 3–147 (HWTDFERSTI…VVFSLGKQYH (145 aa)). Heme b is bound by residues His64 and His93.

This sequence belongs to the globin family. In terms of assembly, hb1 is a heterotetramer of two alpha-1 chains and two beta-1 chains. As to expression, red blood cells.

Involved in oxygen transport from gills to the various peripheral tissues. The polypeptide is Hemoglobin subunit beta-1 (Liparis tunicatus (Kelp snailfish)).